The sequence spans 163 residues: Protein-export protein SecB (163 aa).

Belongs to the SecB family. Homotetramer, a dimer of dimers. One homotetramer interacts with 1 SecA dimer.

The protein resides in the cytoplasm. In terms of biological role, one of the proteins required for the normal export of preproteins out of the cell cytoplasm. It is a molecular chaperone that binds to a subset of precursor proteins, maintaining them in a translocation-competent state. It also specifically binds to its receptor SecA. The sequence is that of Protein-export protein SecB from Shewanella woodyi (strain ATCC 51908 / MS32).